A 426-amino-acid chain; its full sequence is GTPase Obg (426 aa).

An Obg domain is found at 1–158 (MFVDEVEIKV…RSIRLELKLV (158 aa)). An OBG-type G domain is found at 159–330 (ADVGLIGFPN…LIYYTGDLLK (172 aa)). Residues 165 to 172 (GFPNVGKS), 190 to 194 (FTTLK), 212 to 215 (DIPG), 282 to 285 (NKID), and 311 to 313 (SAA) each bind GTP. 2 residues coordinate Mg(2+): S172 and T192. An OCT domain is found at 349–426 (DFADEEENIV…IGPMEFEYME (78 aa)).

It belongs to the TRAFAC class OBG-HflX-like GTPase superfamily. OBG GTPase family. As to quaternary structure, monomer. The cofactor is Mg(2+).

It is found in the cytoplasm. Functionally, an essential GTPase which binds GTP, GDP and possibly (p)ppGpp with moderate affinity, with high nucleotide exchange rates and a fairly low GTP hydrolysis rate. Plays a role in control of the cell cycle, stress response, ribosome biogenesis and in those bacteria that undergo differentiation, in morphogenesis control. The polypeptide is GTPase Obg (Halothermothrix orenii (strain H 168 / OCM 544 / DSM 9562)).